Reading from the N-terminus, the 219-residue chain is Small ribosomal subunit protein uS5 (219 aa).

The S5 DRBM domain maps to Leu52–Val115. Positions Leu196–Glu219 are disordered.

It belongs to the universal ribosomal protein uS5 family. In terms of assembly, part of the 30S ribosomal subunit. Contacts protein S4.

Its function is as follows. With S4 and S12 plays an important role in translational accuracy. This is Small ribosomal subunit protein uS5 from Haloquadratum walsbyi (strain DSM 16790 / HBSQ001).